Consider the following 2871-residue polypeptide: Desmoplakin (2871 aa).

The interaction with PKP1, JUP, PKP2 stretch occupies residues 1–584 (MSCNGGSHPR…DYMKTIADLE (584 aa)). The segment at 1–1056 (MSCNGGSHPR…ANSENCNKNK (1056 aa)) is globular 1. Phosphoserine occurs at positions 22 and 53. Y56 is subject to Phosphotyrosine. T61 carries the phosphothreonine modification. Residues S165, S166, and S176 each carry the phosphoserine modification. 2 Spectrin repeats span residues 178–271 (SGWD…HLRQ) and 272–375 (LQNI…LKEN). The stretch at 376 to 446 (AAYFQFFEEA…NLVNKSKKIV (71 aa)) is one Spectrin 3a repeat. In terms of domain architecture, SH3 spans 458 to 515 (NKPIILRALCDYKQDQKIVHKGDECILKDNNERSKWYVTGPGGVDMLVPSVGLIIPPP). A Spectrin 3b repeat occupies 516 to 545 (NPLAVDLSCKIEQYYEAILALWNQLYINMK). 3 Spectrin repeats span residues 546-627 (SLVS…IQLP), 654-769 (VIET…SLCT), and 770-883 (VRAL…DLEK). Residues 1018 to 1945 (SEMLKSLEDL…QREIDKLRQR (928 aa)) are a coiled coil. The central fibrous rod domain stretch occupies residues 1057–1945 (FLDQNLQKYQ…QREIDKLRQR (889 aa)). S1658, S1708, and S2024 each carry phosphoserine. The segment at 1946–2871 (PYGSHRETQT…YSFSSSSIGH (926 aa)) is globular 2. Positions 1960–2208 (TVDTSKLVFD…LLLSVQKRSM (249 aa)) are 4.5 X 38 AA tandem repeats (Domain A). 17 Plectin repeats span residues 2009 to 2045 (QPFLRGAGSIAGASASPKEKYSLVEAKRKKLISPEST), 2046 to 2083 (VMLLEAQAATGGIIDPHRNEKLTVDSAIARDLIDFDDR), 2084 to 2121 (QQIYAAEKAITGFDDPFSGKTVSVSEAIKKNLIDRETG), 2122 to 2159 (MRLLEAQIASGGVVDPVNSVFLPKDVALARGLIDRDLY), 2163 to 2197 (NDPRDSQKNFVDPVTKKKVSYVQLKERCRIEPHTG), 2198 to 2233 (LLLLSVQKRSMSFQGIRQPVTVTELVDSGILRPSTV), 2251 to 2288 (KDFLQGSSCIAGIYNETTKQKLGIYEAMKIGLVRPGTA), 2289 to 2326 (LELLEAQAATGFIVDPVSNLRLPVEEAYKRGLVGIEFK), 2327 to 2364 (EKLLSAERAVTGYNDPETGNIISLFQAMNKELIEKGHG), 2365 to 2402 (IRLLEAQIATGGIIDPKESHRLPVDIAYKRGYFNEELS), 2406 to 2440 (SDPSDDTKGFFDPNTEENLTYLQLKERCIKDEETG), 2456 to 2493 (SQKNTLRKRRVVIVDPETNKEMSVQEAYKKGLIDYETF), 2507 to 2544 (TITGSDGSTRVVLVDRKTGSQYDIQDAIDKGLVDRKFF), 2610 to 2647 (SDTLEESSPIAAIFDTENLEKISITEGIERGIVDSITG), 2648 to 2685 (QRLLEAQACTGGIIHPTTGQKLSLQDAVSQGVIDQDMA), 2724 to 2761 (QRFLEFQYLTGGLVDPEVHGRISTEEAIRKGFIDGRAA), and 2762 to 2799 (QRLQDTSSYAKILTCPKTKLKISYKDAINRSMVEDITG). A phosphoserine mark is found at S2207, S2209, and S2225. The tract at residues 2244-2446 (DEVGERIKDF…EETGLCLLPL (203 aa)) is 4.5 X 38 AA tandem repeats (Domain B). Residues 2609–2822 (FSDTLEESSP…LPSPYNMSSA (214 aa)) are 4.5 X 38 AA tandem repeats (Domain C). S2810 and S2815 each carry phosphoserine. The span at 2810-2823 (SKGLPSPYNMSSAP) shows a compositional bias: polar residues. The tract at residues 2810 to 2871 (SKGLPSPYNM…YSFSSSSIGH (62 aa)) is disordered. Residue Y2817 is modified to Phosphotyrosine. 3 positions are modified to phosphoserine: S2820, S2821, and S2825. The 6 X 4 AA tandem repeats of G-S-R-[SR] stretch occupies residues 2824–2847 (GSRSGSRSGSRSGSRSGSRSGSRR). Residues 2824–2847 (GSRSGSRSGSRSGSRSGSRSGSRR) are compositionally biased toward low complexity. An omega-N-methylarginine mark is found at R2826 and R2847. S2849 carries the phosphoserine modification. Phosphothreonine is present on T2853. The segment covering 2856–2871 (SSYSYSYSFSSSSIGH) has biased composition (low complexity). S2868 is subject to Phosphoserine.

This sequence belongs to the plakin or cytolinker family. Homodimer. Interacts with COL17A1 (via cytoplasmic region). Interacts with DSC2. Interacts with PKP2. Interacts with PKP1. Interacts weakly with TMEM65. In terms of processing, phosphorylation at Ser-2849 increases association with intermediate filament cytokeratin, potentially facilitating interaction between desmosome junctions and intermediate filament architecture. In terms of tissue distribution, expressed in oral mucosa (at protein level). Expressed in arrector pili muscle (at protein level). Expressed in the heart in the heart (at protein level). Apparently an obligate constituent of all desmosomes. As to expression, resides predominantly in tissues and cells of stratified origin.

The protein resides in the cell junction. It is found in the desmosome. The protein localises to the cell membrane. Its subcellular location is the cytoplasm. Functionally, major high molecular weight protein of desmosomes. Regulates profibrotic gene expression in cardiomyocytes via activation of the MAPK14/p38 MAPK signaling cascade and increase in TGFB1 protein abundance. The protein is Desmoplakin (DSP) of Homo sapiens (Human).